A 371-amino-acid polypeptide reads, in one-letter code: SufE-like protein 1, chloroplastic/mitochondrial (371 aa).

The N-terminal 66 residues, 1 to 66, are a transit peptide targeting the chloroplast and mitochondrion; the sequence is MAAAMSSSCC…ISTGIVPPPS (66 aa). Residue Cys-131 is the Cysteine persulfide intermediate of the active site. S-glutathionyl cysteine is present on Cys-131. Residues 218 to 249 form a disordered region; it reads VKGEEDSSSGESSESSFVSIPETKDEANVPEV.

This sequence belongs to the SufE family. As to quaternary structure, heterotetramer with NFS2. Interacts with NFS2 and NIFS1. Interacts in vitro with GRXS14, GRXS15, GRXS16 and GRXS17, but not with GRXC5. Interacts in vivo only with GRXS14 and GRXS16. Post-translationally, glutathionylated. Glutathionylation strongly reduces the stimulation of NFS2 activity. In terms of tissue distribution, expressed in roots, leaves, stems and flowers.

Its subcellular location is the plastid. The protein resides in the chloroplast stroma. It localises to the mitochondrion. It functions in the pathway cofactor biosynthesis; iron-sulfur cluster biosynthesis. In terms of biological role, participates in cysteine desulfurization mediated by NFS2 in chloroplast and NIFS1 in mitochondrion. Activates the cysteine desulfurase activity of NFS2. Cysteine desulfurization mobilizes sulfur from L-cysteine to yield L-alanine and supplies the inorganic sulfur for iron-sulfur (Fe-S) cluster formation. Glutaredoxins regulate SUFE1 activity by inducing its reduction and deglutathionylation. The sequence is that of SufE-like protein 1, chloroplastic/mitochondrial from Arabidopsis thaliana (Mouse-ear cress).